Reading from the N-terminus, the 461-residue chain is Ribulose bisphosphate carboxylase (461 aa).

Position 112 (N112) interacts with substrate. K167 (proton acceptor) is an active-site residue. A substrate-binding site is contributed by K169. The Mg(2+) site is built by K192, D194, and E195. K192 bears the N6-carboxylysine mark. H288 (proton acceptor) is an active-site residue. Positions 289, 322, and 369 each coordinate substrate.

This sequence belongs to the RuBisCO large chain family. Type II subfamily. Homodimer. It depends on Mg(2+) as a cofactor.

The enzyme catalyses 2 (2R)-3-phosphoglycerate + 2 H(+) = D-ribulose 1,5-bisphosphate + CO2 + H2O. It catalyses the reaction D-ribulose 1,5-bisphosphate + O2 = 2-phosphoglycolate + (2R)-3-phosphoglycerate + 2 H(+). RuBisCO catalyzes two reactions: the carboxylation of D-ribulose 1,5-bisphosphate, the primary event in carbon dioxide fixation, as well as the oxidative fragmentation of the pentose substrate. Both reactions occur simultaneously and in competition at the same active site. This is Ribulose bisphosphate carboxylase from Rhodopseudomonas palustris (strain ATCC BAA-98 / CGA009).